The following is a 101-amino-acid chain: Putative pterin-4-alpha-carbinolamine dehydratase (101 aa).

Belongs to the pterin-4-alpha-carbinolamine dehydratase family.

It catalyses the reaction (4aS,6R)-4a-hydroxy-L-erythro-5,6,7,8-tetrahydrobiopterin = (6R)-L-erythro-6,7-dihydrobiopterin + H2O. The chain is Putative pterin-4-alpha-carbinolamine dehydratase from Nitrobacter hamburgensis (strain DSM 10229 / NCIMB 13809 / X14).